A 160-amino-acid polypeptide reads, in one-letter code: Large ribosomal subunit protein uL22c (160 aa).

Belongs to the universal ribosomal protein uL22 family. As to quaternary structure, part of the 50S ribosomal subunit.

The protein resides in the plastid. It is found in the chloroplast. Its function is as follows. This protein binds specifically to 23S rRNA. The globular domain of the protein is located near the polypeptide exit tunnel on the outside of the subunit, while an extended beta-hairpin is found that lines the wall of the exit tunnel in the center of the 70S ribosome. This Eucalyptus globulus subsp. globulus (Tasmanian blue gum) protein is Large ribosomal subunit protein uL22c (rpl22).